We begin with the raw amino-acid sequence, 328 residues long: MVKLAIDMMGGDDAPGIVLEAVEKAVNDFKDLEIILFGDSSQCTLEHDRVEVRHCTESITMDDEPVRAIKRKKDSSMARMAEAVKSGEADGCVSAGNTGALMSAGLFIVGRIKGVERPALVVTLPTVSGKGFVFMDVGANADAKAEHLLQYAQLGNIYAQKIRGIAEPSVCLLNIGTEAAKGNSLTKKAYRLMEDQHDFNFTGNVEAKGLMNDVADVVVTDGYTGNMILKNLEGVAKAMGKMFKSTLLSSFKNKMAALILRKDLNGLMTKMDYAEYGGSVLLGLNGTVVKAHGSSSAKAFYSAIRQAKIAGEQEIVKTMKETVGTENE.

It belongs to the PlsX family. As to quaternary structure, homodimer. Probably interacts with PlsY.

The protein resides in the cytoplasm. The catalysed reaction is a fatty acyl-[ACP] + phosphate = an acyl phosphate + holo-[ACP]. Its pathway is lipid metabolism; phospholipid metabolism. In terms of biological role, catalyzes the reversible formation of acyl-phosphate (acyl-PO(4)) from acyl-[acyl-carrier-protein] (acyl-ACP). This enzyme utilizes acyl-ACP as fatty acyl donor, but not acyl-CoA. The sequence is that of Phosphate acyltransferase from Staphylococcus saprophyticus subsp. saprophyticus (strain ATCC 15305 / DSM 20229 / NCIMB 8711 / NCTC 7292 / S-41).